Consider the following 739-residue polypeptide: Cellulose synthase catalytic subunit [UDP-forming] (739 aa).

4 consecutive transmembrane segments (helical) span residues 36-55 (VLVV…IISA), 59-76 (LYSQ…VLVL), 83-101 (LAIL…RYMF), and 116-138 (MFFG…FGYV). A catalytic subdomain A region spans residues 157–250 (EWPTVDVFIP…YIALFDADHV (94 aa)). Aspartate 199 is an active-site residue. Substrate is bound by residues aspartate 246 and aspartate 248. Residues 327-387 (EPLLEIGGVA…NQRIRWARGM (61 aa)) are catalytic subdomain B. The active site involves aspartate 343. Transmembrane regions (helical) follow at residues 417–436 (FFYG…YLIF), 440–462 (IFHA…SSLT), 524–546 (PYLV…LIWG), and 551–573 (AVTV…AAVA). Residues 580–677 (QVRSEPRVSA…QSELVRLTFS (98 aa)) enclose the PilZ domain.

Belongs to the glycosyltransferase 2 family. The cofactor is Mg(2+).

It localises to the cell inner membrane. The enzyme catalyses [(1-&gt;4)-beta-D-glucosyl](n) + UDP-alpha-D-glucose = [(1-&gt;4)-beta-D-glucosyl](n+1) + UDP + H(+). It participates in glycan metabolism; bacterial cellulose biosynthesis. With respect to regulation, activated by bis-(3'-5') cyclic diguanylic acid (c-di-GMP). In terms of biological role, catalytic subunit of cellulose synthase. It polymerizes uridine 5'-diphosphate glucose to cellulose, which is produced as an extracellular component responsible for the structural integrity and rigidity of self-supporting mats characteristic of the 'wrinkly spreader' phenotype. The protein is Cellulose synthase catalytic subunit [UDP-forming] (bcsA) of Pseudomonas fluorescens (strain SBW25).